A 433-amino-acid polypeptide reads, in one-letter code: NADH-ubiquinone oxidoreductase chain 4 (433 aa).

The next 13 membrane-spanning stretches (helical) occupy residues 10 to 30 (LFFL…TLFL), 45 to 65 (FFFF…ISIL), 80 to 100 (IFNF…MLEN), 101 to 121 (LLMF…MISG), 132 to 152 (GFYM…LMLL), 169 to 189 (MGFI…MFLF), 203 to 223 (AGSM…LYRF), 234 to 254 (FSFV…IFCL), 261 to 281 (SLIA…CVTF), 286 to 306 (SFGM…LFCL), 331 to 353 (LSMW…NLFG), 366 to 386 (LLLS…SMFM), and 410 to 430 (YLML…NFFM).

This sequence belongs to the complex I subunit 4 family.

Its subcellular location is the mitochondrion membrane. It carries out the reaction a ubiquinone + NADH + 5 H(+)(in) = a ubiquinol + NAD(+) + 4 H(+)(out). Functionally, core subunit of the mitochondrial membrane respiratory chain NADH dehydrogenase (Complex I) that is believed to belong to the minimal assembly required for catalysis. Complex I functions in the transfer of electrons from NADH to the respiratory chain. The immediate electron acceptor for the enzyme is believed to be ubiquinone. The protein is NADH-ubiquinone oxidoreductase chain 4 (ND4) of Rhipicephalus sanguineus (Brown dog tick).